The sequence spans 164 residues: Polygalacturonase (164 aa).

It belongs to the glycosyl hydrolase 28 family.

It is found in the secreted. It localises to the cell wall. The enzyme catalyses (1,4-alpha-D-galacturonosyl)n+m + H2O = (1,4-alpha-D-galacturonosyl)n + (1,4-alpha-D-galacturonosyl)m.. The sequence is that of Polygalacturonase from Cupressus sempervirens (Italian cypress).